Consider the following 464-residue polypeptide: Glutamate decarboxylase beta (464 aa).

Residue Lys-275 is modified to N6-(pyridoxal phosphate)lysine.

Belongs to the group II decarboxylase family. Pyridoxal 5'-phosphate is required as a cofactor.

It carries out the reaction L-glutamate + H(+) = 4-aminobutanoate + CO2. In terms of biological role, converts internalized glutamate to GABA and increases the internal pH. Involved in glutamate-dependent acid resistance in gastric fluid. In Listeria monocytogenes serovar 1/2a (strain ATCC BAA-679 / EGD-e), this protein is Glutamate decarboxylase beta (gadB).